Here is a 295-residue protein sequence, read N- to C-terminus: Acetylglutamate kinase (295 aa).

Residues 64–65 (GG), Arg-86, and Asn-179 each bind substrate.

It belongs to the acetylglutamate kinase family. ArgB subfamily.

The protein resides in the cytoplasm. It carries out the reaction N-acetyl-L-glutamate + ATP = N-acetyl-L-glutamyl 5-phosphate + ADP. Its pathway is amino-acid biosynthesis; L-arginine biosynthesis; N(2)-acetyl-L-ornithine from L-glutamate: step 2/4. Its function is as follows. Catalyzes the ATP-dependent phosphorylation of N-acetyl-L-glutamate. This Thermosynechococcus vestitus (strain NIES-2133 / IAM M-273 / BP-1) protein is Acetylglutamate kinase.